Here is a 517-residue protein sequence, read N- to C-terminus: 2-isopropylmalate synthase (517 aa).

The Pyruvate carboxyltransferase domain occupies 7-269; that stretch reads VIIFDTTLRD…ETGIDTTQIV (263 aa). Mn(2+) contacts are provided by aspartate 16, histidine 204, histidine 206, and asparagine 240. A regulatory domain region spans residues 395–517; sequence KFISQKISTE…KPKAQGSGTI (123 aa).

The protein belongs to the alpha-IPM synthase/homocitrate synthase family. LeuA type 1 subfamily. In terms of assembly, homodimer. Requires Mn(2+) as cofactor.

The protein localises to the cytoplasm. The catalysed reaction is 3-methyl-2-oxobutanoate + acetyl-CoA + H2O = (2S)-2-isopropylmalate + CoA + H(+). It participates in amino-acid biosynthesis; L-leucine biosynthesis; L-leucine from 3-methyl-2-oxobutanoate: step 1/4. Catalyzes the condensation of the acetyl group of acetyl-CoA with 3-methyl-2-oxobutanoate (2-ketoisovalerate) to form 3-carboxy-3-hydroxy-4-methylpentanoate (2-isopropylmalate). This Neisseria meningitidis serogroup A / serotype 4A (strain DSM 15465 / Z2491) protein is 2-isopropylmalate synthase.